Consider the following 231-residue polypeptide: 2-phospho-L-lactate guanylyltransferase (231 aa).

This sequence belongs to the CofC family. As to quaternary structure, homodimer.

It carries out the reaction (2S)-2-phospholactate + GTP + H(+) = (2S)-lactyl-2-diphospho-5'-guanosine + diphosphate. It functions in the pathway cofactor biosynthesis; coenzyme F420 biosynthesis. Guanylyltransferase that catalyzes the activation of (2S)-2-phospholactate (2-PL) as (2S)-lactyl-2-diphospho-5'-guanosine, via the condensation of 2-PL with GTP. It is involved in the biosynthesis of coenzyme F420, a hydride carrier cofactor. The chain is 2-phospho-L-lactate guanylyltransferase from Haloterrigena turkmenica (strain ATCC 51198 / DSM 5511 / JCM 9101 / NCIMB 13204 / VKM B-1734 / 4k) (Halococcus turkmenicus).